A 597-amino-acid chain; its full sequence is Scarecrow-like protein 5 (597 aa).

Residues 111 to 172 form a disordered region; that stretch reads ESSSGTKSHP…SPLSGSSATN (62 aa). Over residues 123-169 the composition is skewed to low complexity; sequence NNKNNSSSTTSFSSNESPISQANNNNLSRFNNHSPEENNNSPLSGSS. The 380-residue stretch at 218–597 folds into the GRAS domain; it reads SMEMISRGDL…QPLITSCAWR (380 aa). Residues 225–285 are leucine repeat I (LRI); the sequence is GDLKGVLYEC…VARLASSGSS (61 aa). The interval 304-369 is VHIID; the sequence is MHILYEACPY…GGPPNVRITG (66 aa). The VHIID signature appears at 335-339; it reads VHIID. The tract at residues 385-417 is leucine repeat II (LRII); it reads LVGQRLGKLAEMCGVPFEFHGAALCCTEVEIEK. Residues 426–520 are PFYRE; it reads LAVNFPLVLH…QHCLAREVVN (95 aa). Residues 523 to 597 form an SAW region; sequence ACEGVEREER…QPLITSCAWR (75 aa).

Belongs to the GRAS family. Expressed in seedlings, roots, shoots, leaves, flowers and siliques.

The protein localises to the nucleus. Its function is as follows. Probable transcription factor involved in plant development. This Arabidopsis thaliana (Mouse-ear cress) protein is Scarecrow-like protein 5 (SCL5).